The sequence spans 123 residues: Small ribosomal subunit protein uS12 (123 aa).

The disordered stretch occupies residues 9-32; sequence ANPREVQKSRKKVPALQQSPQKRG. Aspartate 89 is modified (3-methylthioaspartic acid).

This sequence belongs to the universal ribosomal protein uS12 family. Part of the 30S ribosomal subunit. Contacts proteins S8 and S17. May interact with IF1 in the 30S initiation complex.

Its function is as follows. With S4 and S5 plays an important role in translational accuracy. Functionally, interacts with and stabilizes bases of the 16S rRNA that are involved in tRNA selection in the A site and with the mRNA backbone. Located at the interface of the 30S and 50S subunits, it traverses the body of the 30S subunit contacting proteins on the other side and probably holding the rRNA structure together. The combined cluster of proteins S8, S12 and S17 appears to hold together the shoulder and platform of the 30S subunit. This chain is Small ribosomal subunit protein uS12, found in Bradyrhizobium sp. (strain BTAi1 / ATCC BAA-1182).